Here is a 260-residue protein sequence, read N- to C-terminus: Histidine-binding periplasmic protein (260 aa).

Positions 1-22 (MKKLALSLSLVLAFSSATAAFA) are cleaved as a signal peptide. An intrachain disulfide couples cysteine 60 to cysteine 67. L-histidine-binding residues include serine 91, serine 92, serine 94, arginine 99, threonine 143, and aspartate 183.

It belongs to the bacterial solute-binding protein 3 family. The complex is composed of two ATP-binding proteins (HisP), two transmembrane proteins (HisM and HisQ) and a solute-binding protein (HisJ).

The protein resides in the periplasm. Its function is as follows. Part of the ABC transporter complex HisPMQJ involved in histidine transport. Binds histidine. Interacts with HisQMP and stimulates ATPase activity of HisP, which results in histidine translocation. May have some additional function(s) in translocation that is independent of the stimulation of ATP hydrolysis. The sequence is that of Histidine-binding periplasmic protein from Salmonella typhimurium (strain LT2 / SGSC1412 / ATCC 700720).